We begin with the raw amino-acid sequence, 153 residues long: Small ribosomal subunit protein bS16 (153 aa).

Residues 130–153 (EAEAAAAAEEAPAEEAAEEAPAEA) are disordered. A compositionally biased stretch (acidic residues) spans 140–153 (APAEEAAEEAPAEA).

It belongs to the bacterial ribosomal protein bS16 family.

This Bifidobacterium longum subsp. infantis (strain ATCC 15697 / DSM 20088 / JCM 1222 / NCTC 11817 / S12) protein is Small ribosomal subunit protein bS16.